We begin with the raw amino-acid sequence, 486 residues long: 23S rRNA (uracil(1939)-C(5))-methyltransferase RlmD (486 aa).

Residues 10–71 (TVKAPEYLPD…SSFEKAVVMA (62 aa)) enclose the TRAM domain. 4 residues coordinate [4Fe-4S] cluster: C84, C94, C97, and C176. Q285, F314, N319, E335, N370, and D391 together coordinate S-adenosyl-L-methionine. Residue C442 is the Nucleophile of the active site.

The protein belongs to the class I-like SAM-binding methyltransferase superfamily. RNA M5U methyltransferase family. RlmD subfamily.

The enzyme catalyses uridine(1939) in 23S rRNA + S-adenosyl-L-methionine = 5-methyluridine(1939) in 23S rRNA + S-adenosyl-L-homocysteine + H(+). In terms of biological role, catalyzes the formation of 5-methyl-uridine at position 1939 (m5U1939) in 23S rRNA. In Polaromonas sp. (strain JS666 / ATCC BAA-500), this protein is 23S rRNA (uracil(1939)-C(5))-methyltransferase RlmD.